We begin with the raw amino-acid sequence, 143 residues long: MFMGEYSHTMDAKGRVFIPARFREELGEKFIVTKGLDHCLFVFPQKEWKVIEEKIKALPFTNQDARAFVRLFFAGAAECEQDKQGRVLLPNHLREYAKLDKEVVIVGVGTRVEIWSQELWNNYCNGAQAAYEEIAEKMVDFLL.

SpoVT-AbrB domains are found at residues 5–47 (EYSH…PQKE) and 76–119 (AAEC…SQEL).

It belongs to the MraZ family. As to quaternary structure, forms oligomers.

It localises to the cytoplasm. The protein localises to the nucleoid. This is Transcriptional regulator MraZ from Carboxydothermus hydrogenoformans (strain ATCC BAA-161 / DSM 6008 / Z-2901).